The following is a 532-amino-acid chain: Hepatocyte nuclear factor 1-beta-B (532 aa).

The segment at 1–35 (MFTDMVSKLTSLQQELLSALLDSGVTKDVLVQALE) is dimerization. Residues 5-36 (MVSKLTSLQQELLSALLDSGVTKDVLVQALED) enclose the HNF-p1 domain. Residues 74 to 95 (TGAQGKGGKLSGDEGSEDGDDF) form a disordered region. The POU-specific atypical domain maps to 102–197 (RELQSLNTEE…IDRQFDRVQG (96 aa)). The span at 222-231 (SSGAAGGSGA) shows a compositional bias: gly residues. 2 disordered regions span residues 222-245 (SSGA…KRMR) and 500-532 (EAGQ…LQAW). A DNA-binding region (homeobox; HNF1-type) is located at residues 244 to 324 (MRRNRFKWGP…NRRKEEAFRQ (81 aa)). The segment covering 505-532 (SHPSRYSTMDSSTITHLGSSKQCPLQAW) has biased composition (polar residues).

Belongs to the HNF1 homeobox family. As to quaternary structure, binds DNA as a dimer. Can form homodimer or heterodimer with HNF1-alpha. In terms of tissue distribution, first expressed at stage 10 in the intermediate mesoderm. Expressed in rhombomere r5 by 14 hpf with expression diminishing by 18 hpf.

It localises to the nucleus. In terms of biological role, transcription factor that binds to the inverted palindrome 5'-GTTAATNATTAAC-3'. Acts downstream of hnf1ba but is not required for induction of rhombomere r5/r6 gene expression in the hindbrain. In Danio rerio (Zebrafish), this protein is Hepatocyte nuclear factor 1-beta-B.